Here is a 375-residue protein sequence, read N- to C-terminus: Heat shock protein 42 (375 aa).

Disordered stretches follow at residues threonine 21–tyrosine 59, serine 81–cysteine 127, proline 154–methionine 238, and proline 347–asparagine 375. Positions glycine 22 to valine 48 are enriched in low complexity. The segment covering glycine 49–leucine 58 has biased composition (basic residues). 2 stretches are compositionally biased toward acidic residues: residues glycine 85 to valine 101 and threonine 158 to glutamine 168. The span at glutamate 169–proline 197 shows a compositional bias: basic and acidic residues. Phosphoserine is present on residues serine 182, serine 213, serine 214, serine 215, and serine 223. The sHSP domain maps to arginine 237–glutamate 356. Acidic residues predominate over residues glutamate 357–glutamate 367.

It belongs to the small heat shock protein (HSP20) family. Forms oligomeric complexes. Interacts with itself.

This is Heat shock protein 42 (HSP42) from Saccharomyces cerevisiae (strain ATCC 204508 / S288c) (Baker's yeast).